The chain runs to 299 residues: 33 kDa chaperonin (299 aa).

2 cysteine pairs are disulfide-bonded: Cys-234-Cys-236 and Cys-268-Cys-271.

This sequence belongs to the HSP33 family. Post-translationally, under oxidizing conditions two disulfide bonds are formed involving the reactive cysteines. Under reducing conditions zinc is bound to the reactive cysteines and the protein is inactive.

It is found in the cytoplasm. Its function is as follows. Redox regulated molecular chaperone. Protects both thermally unfolding and oxidatively damaged proteins from irreversible aggregation. Plays an important role in the bacterial defense system toward oxidative stress. This is 33 kDa chaperonin from Pseudomonas putida (strain ATCC 700007 / DSM 6899 / JCM 31910 / BCRC 17059 / LMG 24140 / F1).